A 383-amino-acid chain; its full sequence is ATP phosphoribosyltransferase regulatory subunit (383 aa).

The protein belongs to the class-II aminoacyl-tRNA synthetase family. HisZ subfamily. As to quaternary structure, heteromultimer composed of HisG and HisZ subunits.

The protein localises to the cytoplasm. The protein operates within amino-acid biosynthesis; L-histidine biosynthesis; L-histidine from 5-phospho-alpha-D-ribose 1-diphosphate: step 1/9. Functionally, required for the first step of histidine biosynthesis. May allow the feedback regulation of ATP phosphoribosyltransferase activity by histidine. The chain is ATP phosphoribosyltransferase regulatory subunit from Desulfitobacterium hafniense (strain Y51).